Consider the following 86-residue polypeptide: Small ribosomal subunit protein bS20 (86 aa).

Belongs to the bacterial ribosomal protein bS20 family.

Binds directly to 16S ribosomal RNA. The sequence is that of Small ribosomal subunit protein bS20 from Mycolicibacterium vanbaalenii (strain DSM 7251 / JCM 13017 / BCRC 16820 / KCTC 9966 / NRRL B-24157 / PYR-1) (Mycobacterium vanbaalenii).